The following is a 239-amino-acid chain: Ribonuclease PH (239 aa).

Residues arginine 87 and 125–127 each bind phosphate; that span reads GTR.

The protein belongs to the RNase PH family. In terms of assembly, homohexameric ring arranged as a trimer of dimers.

The enzyme catalyses tRNA(n+1) + phosphate = tRNA(n) + a ribonucleoside 5'-diphosphate. Its function is as follows. Phosphorolytic 3'-5' exoribonuclease that plays an important role in tRNA 3'-end maturation. Removes nucleotide residues following the 3'-CCA terminus of tRNAs; can also add nucleotides to the ends of RNA molecules by using nucleoside diphosphates as substrates, but this may not be physiologically important. Probably plays a role in initiation of 16S rRNA degradation (leading to ribosome degradation) during starvation. This chain is Ribonuclease PH, found in Cellvibrio japonicus (strain Ueda107) (Pseudomonas fluorescens subsp. cellulosa).